A 429-amino-acid chain; its full sequence is Phosphoribosylamine--glycine ligase (429 aa).

One can recognise an ATP-grasp domain in the interval 109 to 316 (KDFLARHQIP…LVDLCLAACD (208 aa)). Position 135–196 (135–196 (LREKGAPIVI…EEFLDGEEAS (62 aa))) interacts with ATP. Residues glutamate 286 and asparagine 288 each contribute to the Mg(2+) site.

The protein belongs to the GARS family. Monomer. It depends on Mg(2+) as a cofactor. Mn(2+) serves as cofactor.

It carries out the reaction 5-phospho-beta-D-ribosylamine + glycine + ATP = N(1)-(5-phospho-beta-D-ribosyl)glycinamide + ADP + phosphate + H(+). Its pathway is purine metabolism; IMP biosynthesis via de novo pathway; N(1)-(5-phospho-D-ribosyl)glycinamide from 5-phospho-alpha-D-ribose 1-diphosphate: step 2/2. This is Phosphoribosylamine--glycine ligase from Salmonella typhimurium (strain LT2 / SGSC1412 / ATCC 700720).